Here is a 163-residue protein sequence, read N- to C-terminus: Nucleotide-binding protein Dhaf_3127 (163 aa).

Belongs to the YajQ family.

Its function is as follows. Nucleotide-binding protein. This chain is Nucleotide-binding protein Dhaf_3127, found in Desulfitobacterium hafniense (strain DSM 10664 / DCB-2).